The chain runs to 1482 residues: Glutamate receptor ionotropic, NMDA 2B (1482 aa).

An N-terminal signal peptide occupies residues 1–26 (MKPSAECCSPKFWLVLAVLAVSGSKA). At 27 to 557 (RSQKSAPSIG…SAFLEPFSAD (531 aa)) the chain is on the extracellular side. N-linked (GlcNAc...) asparagine glycosylation occurs at asparagine 74. A disulfide bridge connects residues cysteine 86 and cysteine 321. The Zn(2+) site is built by histidine 127 and glutamate 284. N-linked (GlcNAc...) asparagine glycosylation is found at asparagine 341, asparagine 348, asparagine 444, and asparagine 491. Intrachain disulfides connect cysteine 429–cysteine 456 and cysteine 436–cysteine 457. 2 residues coordinate L-glutamate: threonine 514 and arginine 519. The N-linked (GlcNAc...) asparagine glycan is linked to asparagine 542. A helical transmembrane segment spans residues 558–576 (VWVMMFVMLLIVSAVAVFV). Topologically, residues 577 to 603 (FEYFSPVGYNRCLADGREPGGPSFTIG) are cytoplasmic. Residues 604–623 (KAIWLLWGLVFNNSVPVQNP) constitute an intramembrane region (discontinuously helical). Positions 604–623 (KAIWLLWGLVFNNSVPVQNP) are pore-forming. Residues 624–630 (KGTTSKI) are Cytoplasmic-facing. Residues 631–646 (MVSVWAFFAVIFLASY) form a helical membrane-spanning segment. The Extracellular segment spans residues 647–817 (TANLAAFMIQ…VMSSQLDIDN (171 aa)). The N-linked (GlcNAc...) asparagine glycan is linked to asparagine 688. Residues 690–691 (ST) and aspartate 732 contribute to the L-glutamate site. Residues cysteine 746 and cysteine 801 are joined by a disulfide bond. A helical transmembrane segment spans residues 818–837 (MAGVFYMLGAAMALSLITFI). The Cytoplasmic portion of the chain corresponds to 838 to 1482 (CEHLFYWQFR…EKLSSIESDV (645 aa)). Residues serine 882, serine 886, serine 917, and serine 920 each carry the phosphoserine modification. Phosphotyrosine occurs at positions 962 and 1039. Phosphoserine is present on residues serine 1058, serine 1061, and serine 1064. Positions 1074-1097 (EGNAAKRRKQQYKDSLKKRPASAK) are disordered. Phosphotyrosine is present on residues tyrosine 1109 and tyrosine 1133. Serine 1143 bears the Phosphoserine mark. Tyrosine 1155 is subject to Phosphotyrosine. Residues 1162–1194 (FKRDSVSGGGPCTNRSHLKHGTGDKHGVVGGVP) form a disordered region. Phosphoserine is present on residues serine 1255 and serine 1259. The segment covering 1266-1277 (PAAPVAVSSNAS) has biased composition (low complexity). The segment at 1266–1301 (PAAPVAVSSNASTTKYPQSPTNSKAQKKNRNKLRRQ) is disordered. Positions 1278 to 1289 (TTKYPQSPTNSK) are enriched in polar residues. The segment covering 1290–1301 (AQKKNRNKLRRQ) has biased composition (basic residues). The interaction with DAPK1 stretch occupies residues 1292-1304 (KKNRNKLRRQHSY). Serine 1303 carries the phosphoserine; by DAPK1 modification. Position 1472 is a phosphotyrosine (tyrosine 1472). Residues 1480–1482 (SDV) carry the PDZ-binding motif.

It belongs to the glutamate-gated ion channel (TC 1.A.10.1) family. NR2B/GRIN2B subfamily. Heterotetramer. Forms heterotetrameric channels composed of two GluN1/zeta subunits (GRIN1), and two identical GluN2/epsilon subunits (GRIN2A, GRIN2B, GRIN2C or GRIN2D) or GluN3 subunits (GRIN3A or GRIN3B) (in vitro). Can also form heterotetrameric channels that contain at least two GluN1 subunits and at least two different GluN2 subunits (or a combination of one GluN2 and one GluN3 subunits) (in vitro). In vivo, the subunit composition may depend on the expression levels of the different subunits. Found in a complex with GRIN1, GRIN3A and PPP2CB. Interacts with MAGI3. Interacts with HIP1 and NETO1. Interacts with PDZ domains of PATJ, DLG3 and DLG4. Interacts with DAPK1. Found in a complex with GRIN1 and PRR7. Interacts with PRR7. Interacts with CAMK2A. Interacts with ARC; preventing ARC oligomerization. Interacts with TMEM25. Interacts (via the extreme C-terminus) with FRMPD2 (via the second PDZ domain); the interaction is direct and is likely to promote NMDAR-mediated neural signal transmission. GRIN2A binds FRMPD2 with lower affinity than GRIN2B. Interacts with FAM81A; the interaction facilitates condensate formation via liquid-liquid phase separation. In terms of processing, phosphorylated on tyrosine residues. Phosphorylation at Ser-1303 by DAPK1 enhances synaptic NMDA receptor channel activity. In terms of tissue distribution, detected in brain (at protein level). Detected throughout the brain, and in brain stem trigeminal nucleus. Detected in forebrain.

It localises to the cell membrane. Its subcellular location is the postsynaptic cell membrane. The protein resides in the cell projection. It is found in the dendrite. The protein localises to the late endosome. It localises to the lysosome. Its subcellular location is the cytoplasm. The protein resides in the cytoskeleton. The catalysed reaction is Ca(2+)(in) = Ca(2+)(out). It catalyses the reaction Na(+)(in) = Na(+)(out). The enzyme catalyses K(+)(in) = K(+)(out). In terms of biological role, component of N-methyl-D-aspartate (NMDA) receptors (NMDARs) that function as heterotetrameric, ligand-gated cation channels with high calcium permeability and voltage-dependent block by Mg(2+). Participates in synaptic plasticity for learning and memory formation by contributing to the long-term depression (LTD) of hippocampus membrane currents. Channel activation requires binding of the neurotransmitter L-glutamate to the GluN2 subunit, glycine or D-serine binding to the GluN1 subunit, plus membrane depolarization to eliminate channel inhibition by Mg(2+). NMDARs mediate simultaneously the potasium efflux and the influx of calcium and sodium. Each GluN2 subunit confers differential attributes to channel properties, including activation, deactivation and desensitization kinetics, pH sensitivity, Ca2(+) permeability, and binding to allosteric modulators. In concert with DAPK1 at extrasynaptic sites, acts as a central mediator for stroke damage. Its phosphorylation at Ser-1303 by DAPK1 enhances synaptic NMDA receptor channel activity inducing injurious Ca2+ influx through them, resulting in an irreversible neuronal death. This chain is Glutamate receptor ionotropic, NMDA 2B, found in Mus musculus (Mouse).